Reading from the N-terminus, the 323-residue chain is Trihelix transcription factor GT-3a (323 aa).

Over residues 1 to 20 (MDRRNPFQHHHHHHQLHHHL) the composition is skewed to basic residues. Positions 1 to 51 (MDRRNPFQHHHHHHQLHHHLIQQQQLPPPPLSTTATMDPGGGGGGGERIPQ) are disordered. Positions 52–108 (WSIEETKELLAIREELDQTFMETKRNKLLWEVVAAKMADKGFVRSAEQCKSKWKNLV) constitute a Myb-like domain. 3 disordered regions span residues 147 to 176 (EATEPSTSSKRKHHQFSSDDEEEEVDEPNQ), 190 to 220 (KRETEVITTSTSTNPRKRAKKGKGVASGTKA), and 269 to 297 (ELEEERAATERRWMEREEERRLREEARAQ). A compositionally biased stretch (acidic residues) spans 164 to 176 (SDDEEEEVDEPNQ).

In terms of assembly, homodimer. Heterodimer with GT-3B. As to expression, predominantly expressed in roots and flower buds.

The protein resides in the nucleus. Functionally, probable transcription factor that binds specifically to the core DNA sequence 5'-GTTAC-3'. The chain is Trihelix transcription factor GT-3a (GT-3A) from Arabidopsis thaliana (Mouse-ear cress).